The chain runs to 200 residues: 3-isopropylmalate dehydratase small subunit (200 aa).

This sequence belongs to the LeuD family. LeuD type 1 subfamily. Heterodimer of LeuC and LeuD.

It catalyses the reaction (2R,3S)-3-isopropylmalate = (2S)-2-isopropylmalate. It functions in the pathway amino-acid biosynthesis; L-leucine biosynthesis; L-leucine from 3-methyl-2-oxobutanoate: step 2/4. In terms of biological role, catalyzes the isomerization between 2-isopropylmalate and 3-isopropylmalate, via the formation of 2-isopropylmaleate. In Pseudarthrobacter chlorophenolicus (strain ATCC 700700 / DSM 12829 / CIP 107037 / JCM 12360 / KCTC 9906 / NCIMB 13794 / A6) (Arthrobacter chlorophenolicus), this protein is 3-isopropylmalate dehydratase small subunit.